We begin with the raw amino-acid sequence, 326 residues long: Undecaprenyl-phosphate 4-deoxy-4-formamido-L-arabinose transferase (326 aa).

2 helical membrane passes run 234-254 (LLSI…ILLI) and 269-289 (VFTL…GMGL).

The protein belongs to the glycosyltransferase 2 family.

It is found in the cell inner membrane. The catalysed reaction is UDP-4-deoxy-4-formamido-beta-L-arabinose + di-trans,octa-cis-undecaprenyl phosphate = 4-deoxy-4-formamido-alpha-L-arabinopyranosyl di-trans,octa-cis-undecaprenyl phosphate + UDP. Its pathway is glycolipid biosynthesis; 4-amino-4-deoxy-alpha-L-arabinose undecaprenyl phosphate biosynthesis; 4-amino-4-deoxy-alpha-L-arabinose undecaprenyl phosphate from UDP-4-deoxy-4-formamido-beta-L-arabinose and undecaprenyl phosphate: step 1/2. It functions in the pathway bacterial outer membrane biogenesis; lipopolysaccharide biosynthesis. Its function is as follows. Catalyzes the transfer of 4-deoxy-4-formamido-L-arabinose from UDP to undecaprenyl phosphate. The modified arabinose is attached to lipid A and is required for resistance to polymyxin and cationic antimicrobial peptides. The sequence is that of Undecaprenyl-phosphate 4-deoxy-4-formamido-L-arabinose transferase from Aeromonas hydrophila subsp. hydrophila (strain ATCC 7966 / DSM 30187 / BCRC 13018 / CCUG 14551 / JCM 1027 / KCTC 2358 / NCIMB 9240 / NCTC 8049).